Reading from the N-terminus, the 272-residue chain is UPF0759 protein YecE (272 aa).

It belongs to the UPF0759 family.

The protein is UPF0759 protein YecE (yecE) of Escherichia coli O157:H7.